Here is a 137-residue protein sequence, read N- to C-terminus: Photosystem II reaction center W protein, chloroplastic (137 aa).

The N-terminal 64 residues, 1-64 (MATITASSSA…ETTTTTNKSM (64 aa)), are a transit peptide targeting the chloroplast. The transit peptide at 65–83 (GASLLAAAAAATISNPAMA) directs the protein to the thylakoid. The Lumenal, thylakoid segment spans residues 84-103 (LVDERMSTEGTGLPFGLSNN). A helical membrane pass occupies residues 104-123 (LLGWILFGVFGLIWALYFVY). Topologically, residues 124–137 (ASGLEEDEESGLSL) are stromal.

In terms of assembly, part of the photosystem II complex. PSII is composed of 1 copy each of membrane proteins PsbA, PsbB, PsbC, PsbD, numerous small proteins, at least 3 peripheral proteins of the oxygen-evolving complex and a large number of cofactors. It forms dimeric complexes.

It localises to the plastid. The protein resides in the chloroplast thylakoid membrane. Functionally, stabilizes dimeric photosystem II (PSII). In its absence no dimeric PSII accumulates and there is a reduction of monomeric PSII. In Spinacia oleracea (Spinach), this protein is Photosystem II reaction center W protein, chloroplastic.